The chain runs to 365 residues: Phosphoserine aminotransferase (365 aa).

Residue Arg-40 coordinates L-glutamate. Pyridoxal 5'-phosphate is bound by residues 74–75 (AS), Phe-99, Thr-155, Asp-177, and Gln-200. Residue Lys-201 is modified to N6-(pyridoxal phosphate)lysine. A pyridoxal 5'-phosphate-binding site is contributed by 241 to 242 (NT).

It belongs to the class-V pyridoxal-phosphate-dependent aminotransferase family. SerC subfamily. Homodimer. Pyridoxal 5'-phosphate serves as cofactor.

Its subcellular location is the cytoplasm. The enzyme catalyses O-phospho-L-serine + 2-oxoglutarate = 3-phosphooxypyruvate + L-glutamate. It carries out the reaction 4-(phosphooxy)-L-threonine + 2-oxoglutarate = (R)-3-hydroxy-2-oxo-4-phosphooxybutanoate + L-glutamate. It functions in the pathway amino-acid biosynthesis; L-serine biosynthesis; L-serine from 3-phospho-D-glycerate: step 2/3. Functionally, catalyzes the reversible conversion of 3-phosphohydroxypyruvate to phosphoserine and of 3-hydroxy-2-oxo-4-phosphonooxybutanoate to phosphohydroxythreonine. The protein is Phosphoserine aminotransferase of Lactococcus lactis subsp. cremoris (strain MG1363).